A 641-amino-acid polypeptide reads, in one-letter code: MPAITLPDGSRREFDHPVTVRDVAESIGKGLARAALAGRVDGRLVDLSHRIDDDVQLEIVTDRDPDGVDMIRHSTAHLMAQAVKELFPEAQVTIGPVIENGFYYDFAYKRPFTEDDLKAIEKKMEELARQDFEVHREVWDRDEAIRFFLEQGEQYKAEIIEDLPEHETISVYKQGDFLDLCRGPHVPNTGKLKAFKLQKVAGAYWRGKSDNEMLQRIYGTAWPDKKQLKAYLHRLAEAEKRDHRRIGRAQNLFHLQEEAPGMAFWHPKGWQIYLEVQEYIRRLTRGHGYQEIHTPQLVDRSLWEKSGHWDKFQDNMFITESESRDYAVKPMNCPCHVQVYNQGLKSYRDLPLRLAEFGSCHRNEPSGTLHGLMRVRNFVQDDAHIFCTEDQIQQEVADFIDLVFKAYNDFGFDDVIIALSTRPDERVGEDALWDKAEHALEEALNRAGLEWQLQPGEGAFYGPKIEFTLKDCLGRTWQLGTIQVDFSMPGRLGATYVAEDGSKKVPVMLHRAILGSLERFIGILIEHYAGALPPWLAPVQAVVLNITDRQGEYARRIEKRFRERGLRVDADLRNEKIGFKIREHTLQKVPYMLVVGDKEVENNTVAVRTREGQDLGSMAVDDFLQRLESEIARLGRSNSED.

Positions Met1–Thr61 constitute a TGS domain. The segment at Asp242–Pro533 is catalytic. 3 residues coordinate Zn(2+): Cys333, His384, and His510.

The protein belongs to the class-II aminoacyl-tRNA synthetase family. Homodimer. Zn(2+) serves as cofactor.

It is found in the cytoplasm. It catalyses the reaction tRNA(Thr) + L-threonine + ATP = L-threonyl-tRNA(Thr) + AMP + diphosphate + H(+). Catalyzes the attachment of threonine to tRNA(Thr) in a two-step reaction: L-threonine is first activated by ATP to form Thr-AMP and then transferred to the acceptor end of tRNA(Thr). Also edits incorrectly charged L-seryl-tRNA(Thr). This Alkalilimnicola ehrlichii (strain ATCC BAA-1101 / DSM 17681 / MLHE-1) protein is Threonine--tRNA ligase.